A 271-amino-acid chain; its full sequence is Ribosomal RNA small subunit methyltransferase A (271 aa).

Positions 11, 13, 38, 58, 86, and 101 each coordinate S-adenosyl-L-methionine.

This sequence belongs to the class I-like SAM-binding methyltransferase superfamily. rRNA adenine N(6)-methyltransferase family. RsmA subfamily.

The protein localises to the cytoplasm. It carries out the reaction adenosine(1518)/adenosine(1519) in 16S rRNA + 4 S-adenosyl-L-methionine = N(6)-dimethyladenosine(1518)/N(6)-dimethyladenosine(1519) in 16S rRNA + 4 S-adenosyl-L-homocysteine + 4 H(+). Its function is as follows. Specifically dimethylates two adjacent adenosines (A1518 and A1519) in the loop of a conserved hairpin near the 3'-end of 16S rRNA in the 30S particle. May play a critical role in biogenesis of 30S subunits. In Helicobacter pylori (strain HPAG1), this protein is Ribosomal RNA small subunit methyltransferase A.